Here is a 524-residue protein sequence, read N- to C-terminus: Cytochrome P450 1A1 (524 aa).

The tract at residues 33 to 44 (TRTWVPKGLKSP) is mitochondrial targeting signal. Ser71 carries an O-linked (GlcNAc) serine glycan. Phe228 is a binding site for substrate. A heme-binding site is contributed by Cys461.

It belongs to the cytochrome P450 family. As to quaternary structure, both Cytochrome P450MT2A and Cytochrome P450MT2B interact with cytosolic chaperones HSP70 and HSP90; this interaction is required for initial targeting to mitochondria. P450MT2B interacts (via mitochondrial targeting signal) with TOMM40 (via N-terminus); this interaction is required for translocation across the mitochondrial outer membrane. Heme serves as cofactor. Two forms; MT2A (long form) and MT2B (short form); are produced by NH2-terminal proteolytic cleavage. This cleavage activates a cryptic mitochondrial targeting signal. Liver.

The protein resides in the cytoplasm. It is found in the endoplasmic reticulum membrane. The protein localises to the mitochondrion inner membrane. Its subcellular location is the microsome membrane. The catalysed reaction is an organic molecule + reduced [NADPH--hemoprotein reductase] + O2 = an alcohol + oxidized [NADPH--hemoprotein reductase] + H2O + H(+). It carries out the reaction estrone + reduced [NADPH--hemoprotein reductase] + O2 = 2-hydroxyestrone + oxidized [NADPH--hemoprotein reductase] + H2O + H(+). The enzyme catalyses estrone + reduced [NADPH--hemoprotein reductase] + O2 = 4-hydroxyestrone + oxidized [NADPH--hemoprotein reductase] + H2O + H(+). It catalyses the reaction estrone + reduced [NADPH--hemoprotein reductase] + O2 = 6alpha-hydroxyestrone + oxidized [NADPH--hemoprotein reductase] + H2O + H(+). The catalysed reaction is estrone + reduced [NADPH--hemoprotein reductase] + O2 = 15alpha-hydroxyestrone + oxidized [NADPH--hemoprotein reductase] + H2O + H(+). It carries out the reaction estrone + reduced [NADPH--hemoprotein reductase] + O2 = 16alpha-hydroxyestrone + oxidized [NADPH--hemoprotein reductase] + H2O + H(+). The enzyme catalyses 17beta-estradiol + reduced [NADPH--hemoprotein reductase] + O2 = 2-hydroxy-17beta-estradiol + oxidized [NADPH--hemoprotein reductase] + H2O + H(+). It catalyses the reaction 17beta-estradiol + reduced [NADPH--hemoprotein reductase] + O2 = 4-hydroxy-17beta-estradiol + oxidized [NADPH--hemoprotein reductase] + H2O + H(+). The catalysed reaction is 17beta-estradiol + reduced [NADPH--hemoprotein reductase] + O2 = 6alpha-hydroxy-17beta-estradiol + oxidized [NADPH--hemoprotein reductase] + H2O + H(+). It carries out the reaction 17beta-estradiol + reduced [NADPH--hemoprotein reductase] + O2 = 7alpha-hydroxy-17beta-estradiol + oxidized [NADPH--hemoprotein reductase] + H2O + H(+). The enzyme catalyses 17beta-estradiol + reduced [NADPH--hemoprotein reductase] + O2 = 15alpha-hydroxy-17beta-estradiol + oxidized [NADPH--hemoprotein reductase] + H2O + H(+). It catalyses the reaction (5Z,8Z,11Z)-eicosatrienoate + reduced [NADPH--hemoprotein reductase] + O2 = 19-hydroxy-(5Z,8Z,11Z)-eicosatrienoate + oxidized [NADPH--hemoprotein reductase] + H2O + H(+). The catalysed reaction is (5Z,8Z,11Z,14Z)-eicosatetraenoate + reduced [NADPH--hemoprotein reductase] + O2 = 16-hydroxy-(5Z,8Z,11Z,14Z)-eicosatetraenoate + oxidized [NADPH--hemoprotein reductase] + H2O + H(+). It carries out the reaction (5Z,8Z,11Z,14Z)-eicosatetraenoate + reduced [NADPH--hemoprotein reductase] + O2 = 17-hydroxy-(5Z,8Z,11Z,14Z)-eicosatetraenoate + oxidized [NADPH--hemoprotein reductase] + H2O + H(+). The enzyme catalyses (5Z,8Z,11Z,14Z)-eicosatetraenoate + reduced [NADPH--hemoprotein reductase] + O2 = 18-hydroxy-(5Z,8Z,11Z,14Z)-eicosatetraenoate + oxidized [NADPH--hemoprotein reductase] + H2O + H(+). It catalyses the reaction (5Z,8Z,11Z,14Z)-eicosatetraenoate + reduced [NADPH--hemoprotein reductase] + O2 = 19-hydroxy-(5Z,8Z,11Z,14Z)-eicosatetraenoate + oxidized [NADPH--hemoprotein reductase] + H2O + H(+). The catalysed reaction is (5Z,8Z,11Z,14Z,17Z)-eicosapentaenoate + reduced [NADPH--hemoprotein reductase] + O2 = 19-hydroxy-(5Z,8Z,11Z,14Z,17Z)-eicosapentaenoate + oxidized [NADPH--hemoprotein reductase] + H2O + H(+). It carries out the reaction (5Z,8Z,11Z,14Z)-eicosatetraenoate + reduced [NADPH--hemoprotein reductase] + O2 = (8R,9S)-epoxy-(5Z,11Z,14Z)-eicosatrienoate + oxidized [NADPH--hemoprotein reductase] + H2O + H(+). The enzyme catalyses (5Z,8Z,11Z,14Z)-eicosatetraenoate + reduced [NADPH--hemoprotein reductase] + O2 = (11R,12S)-epoxy-(5Z,8Z,14Z)-eicosatrienoate + oxidized [NADPH--hemoprotein reductase] + H2O + H(+). It catalyses the reaction (5Z,8Z,11Z,14Z)-eicosatetraenoate + reduced [NADPH--hemoprotein reductase] + O2 = (11S,12R)-epoxy-(5Z,8Z,14Z)-eicosatrienoate + oxidized [NADPH--hemoprotein reductase] + H2O + H(+). The catalysed reaction is (5Z,8Z,11Z,14Z)-eicosatetraenoate + reduced [NADPH--hemoprotein reductase] + O2 = (14R,15S)-epoxy-(5Z,8Z,11Z)-eicosatrienoate + oxidized [NADPH--hemoprotein reductase] + H2O + H(+). It carries out the reaction (5Z,8Z,11Z,14Z,17Z)-eicosapentaenoate + reduced [NADPH--hemoprotein reductase] + O2 = (17R,18S)-epoxy-(5Z,8Z,11Z,14Z)-eicosatetraenoate + oxidized [NADPH--hemoprotein reductase] + H2O + H(+). The enzyme catalyses (4Z,7Z,10Z,13Z,16Z,19Z)-docosahexaenoate + reduced [NADPH--hemoprotein reductase] + O2 = (19S,20R)-epoxy-(4Z,7Z,10Z,13Z,16Z)-docosapentaenoate + oxidized [NADPH--hemoprotein reductase] + H2O + H(+). It catalyses the reaction (4Z,7Z,10Z,13Z,16Z,19Z)-docosahexaenoate + reduced [NADPH--hemoprotein reductase] + O2 = (19R,20S)-epoxy-(4Z,7Z,10Z,13Z,16Z)-docosapentaenoate + oxidized [NADPH--hemoprotein reductase] + H2O + H(+). The catalysed reaction is all-trans-retinol + reduced [NADPH--hemoprotein reductase] + O2 = all-trans-retinal + oxidized [NADPH--hemoprotein reductase] + 2 H2O + H(+). It carries out the reaction all-trans-retinal + reduced [NADPH--hemoprotein reductase] + O2 = all-trans-retinoate + oxidized [NADPH--hemoprotein reductase] + H2O + 2 H(+). The enzyme catalyses (13S)-hydroperoxy-(9Z,11E)-octadecadienoate = 13-oxo-(9Z,11E)-octadecadienoate + H2O. It catalyses the reaction (12S)-hydroperoxy-(5Z,8Z,10E,14Z)-eicosatetraenoate = 12-oxo-(5Z,8Z,10E,14Z)-eicosatetraenoate + H2O. The catalysed reaction is (15S)-hydroperoxy-(5Z,8Z,11Z,13E)-eicosatetraenoate = 15-oxo-(5Z,8Z,11Z,13E)-eicosatetraenoate + H2O. It carries out the reaction (5S)-hydroperoxy-(6E,8Z,11Z,14Z)-eicosatetraenoate = 5-oxo-(6E,8Z,11Z,14Z)-eicosatetraenoate + H2O. Its pathway is steroid hormone biosynthesis. It participates in lipid metabolism; fatty acid metabolism. It functions in the pathway cofactor metabolism; retinol metabolism. Its function is as follows. A cytochrome P450 monooxygenase involved in the metabolism of various endogenous substrates, including fatty acids, steroid hormones and vitamins. Mechanistically, uses molecular oxygen inserting one oxygen atom into a substrate, and reducing the second into a water molecule, with two electrons provided by NADPH via cytochrome P450 reductase (CPR; NADPH-ferrihemoprotein reductase). Catalyzes the hydroxylation of carbon-hydrogen bonds. Exhibits high catalytic activity for the formation of hydroxyestrogens from estrone (E1) and 17beta-estradiol (E2), namely 2-hydroxy E1 and E2, as well as D-ring hydroxylated E1 and E2 at the C15alpha and C16alpha positions. Displays different regioselectivities for polyunsaturated fatty acids (PUFA) hydroxylation. Catalyzes the epoxidation of double bonds of certain PUFA. Converts arachidonic acid toward epoxyeicosatrienoic acid (EET) regioisomers, 8,9-, 11,12-, and 14,15-EET, that function as lipid mediators in the vascular system. Displays an absolute stereoselectivity in the epoxidation of eicosapentaenoic acid (EPA) producing the 17(R),18(S) enantiomer. May play an important role in all-trans retinoic acid biosynthesis in extrahepatic tissues. Catalyzes two successive oxidative transformation of all-trans retinol to all-trans retinal and then to the active form all-trans retinoic acid. May also participate in eicosanoids metabolism by converting hydroperoxide species into oxo metabolites (lipoxygenase-like reaction, NADPH-independent). The protein is Cytochrome P450 1A1 of Rattus norvegicus (Rat).